The sequence spans 101 residues: Ubiquitin-related modifier 1 homolog (101 aa).

Glycine 101 bears the 1-thioglycine mark. Glycine 101 is covalently cross-linked (Glycyl lysine isopeptide (Gly-Lys) (interchain with K-? in acceptor proteins)).

The protein belongs to the URM1 family. Interacts with cer. C-terminal thiocarboxylation occurs in 2 steps, it is first acyl-adenylated (-COAMP) via the hesA/moeB/thiF part of the MOCS3 homolog, then thiocarboxylated (-COSH) via the rhodanese domain of the MOCS3 homolog.

It is found in the cytoplasm. The protein operates within tRNA modification; 5-methoxycarbonylmethyl-2-thiouridine-tRNA biosynthesis. Functionally, acts as a sulfur carrier required for 2-thiolation of mcm(5)S(2)U at tRNA wobble positions of cytosolic tRNA(Lys), tRNA(Glu) and tRNA(Gln). Serves as sulfur donor in tRNA 2-thiolation reaction by being thiocarboxylated (-COSH) at its C-terminus by MOCS3. The sulfur is then transferred to tRNA to form 2-thiolation of mcm(5)S(2)U. Also acts as a ubiquitin-like protein (UBL) that is covalently conjugated via an isopeptide bond to lysine residues of target proteins such as Prx2/Jafrac1, Ciao1, Eip71CD and GILT1. The thiocarboxylated form serves as substrate for conjugation and oxidative stress specifically induces the formation of UBL-protein conjugates. The polypeptide is Ubiquitin-related modifier 1 homolog (Drosophila ananassae (Fruit fly)).